Here is an 858-residue protein sequence, read N- to C-terminus: Bifunctional uridylyltransferase/uridylyl-removing enzyme (858 aa).

Positions 1-324 (MSASVAEPPP…PATSGVTRVL (324 aa)) are uridylyltransferase. The segment at 325–681 (SPGRFVEKQG…ARPSPVGDAL (357 aa)) is uridylyl-removing. Residues 443-565 (VDQHILMVLR…VGSERRLTAL (123 aa)) enclose the HD domain. ACT domains are found at residues 682 to 761 (QVLV…PEPS) and 790 to 858 (ILSV…AIAV).

Belongs to the GlnD family. Mg(2+) serves as cofactor.

The enzyme catalyses [protein-PII]-L-tyrosine + UTP = [protein-PII]-uridylyl-L-tyrosine + diphosphate. It carries out the reaction [protein-PII]-uridylyl-L-tyrosine + H2O = [protein-PII]-L-tyrosine + UMP + H(+). Uridylyltransferase (UTase) activity is inhibited by glutamine, while glutamine activates uridylyl-removing (UR) activity. Modifies, by uridylylation and deuridylylation, the PII regulatory proteins (GlnB and homologs), in response to the nitrogen status of the cell that GlnD senses through the glutamine level. Under low glutamine levels, catalyzes the conversion of the PII proteins and UTP to PII-UMP and PPi, while under higher glutamine levels, GlnD hydrolyzes PII-UMP to PII and UMP (deuridylylation). Thus, controls uridylylation state and activity of the PII proteins, and plays an important role in the regulation of nitrogen assimilation and metabolism. This Burkholderia pseudomallei (strain K96243) protein is Bifunctional uridylyltransferase/uridylyl-removing enzyme.